We begin with the raw amino-acid sequence, 77 residues long: U9-lycotoxin-Ls1a (77 aa).

The N-terminal stretch at 1-20 (MKLLLFTALVLVVIVSLIEA) is a signal peptide. A propeptide spanning residues 21 to 26 (EAENER) is cleaved from the precursor.

The protein belongs to the neurotoxin 19 (CSTX) family. 08 (U8-Lctx) subfamily. In terms of processing, contains 4 disulfide bonds. In terms of tissue distribution, expressed by the venom gland.

The protein resides in the secreted. The polypeptide is U9-lycotoxin-Ls1a (Lycosa singoriensis (Wolf spider)).